The following is a 130-amino-acid chain: DVTWDKNIGNGKVFGTLGQNDDGLFGKAGFKQQFFNDDRGKFEGQAYGTRVLGPAGGTTNFGGRLDWSDKNANAALDISKQIGGRPNLSASGAGVWDFDKNTRLSAGGSLSTMGRGKPDVGVHAQFQHDF.

As to expression, hemolymph.

The protein resides in the secreted. In terms of biological role, antibacterial protein active against Gram-negative bacteria. This is Gloverin from Hyalophora cecropia (Cecropia moth).